The chain runs to 238 residues: Uridylate kinase (238 aa).

Residue 12-15 (KLSG) coordinates ATP. UMP is bound at residue Gly-54. ATP is bound by residues Gly-55 and Arg-59. Residues Asp-74 and 135 to 142 (TGNPFFTT) each bind UMP. Positions 162, 163, 168, and 171 each coordinate ATP.

This sequence belongs to the UMP kinase family. In terms of assembly, homohexamer.

The protein resides in the cytoplasm. It carries out the reaction UMP + ATP = UDP + ADP. It functions in the pathway pyrimidine metabolism; CTP biosynthesis via de novo pathway; UDP from UMP (UMPK route): step 1/1. Its activity is regulated as follows. Inhibited by UTP. Functionally, catalyzes the reversible phosphorylation of UMP to UDP. This is Uridylate kinase from Rhodopseudomonas palustris (strain BisB18).